A 160-amino-acid chain; its full sequence is UPF0225 protein CGSHiEE_01665 (160 aa).

It belongs to the UPF0225 family.

This chain is UPF0225 protein CGSHiEE_01665, found in Haemophilus influenzae (strain PittEE).